Here is a 307-residue protein sequence, read N- to C-terminus: 4-hydroxybenzoate octaprenyltransferase (307 aa).

9 consecutive transmembrane segments (helical) span residues 19–39 (PVGIELLLWPTLWGVLFAAMG), 48–68 (VTAGLPSLSIFVVFALGAILM), 105–125 (AIAAFLVLVLLSASLLLFLPI), 127–147 (VFYWSFAAVILAFIYPFMKRY), 150–170 (LPQVFLAAAFGWAIPMAYVAI), 172–192 (GAADIWCWLLFLAYMCWTVAY), 221–241 (VIIISLLQILFLVIMGAVMWH), 243–263 (FVPTSLGITPVFGLALVAMMF), and 282–302 (FLANIWVGRYVFALIAIACVW).

Belongs to the UbiA prenyltransferase family. Requires Mg(2+) as cofactor.

The protein resides in the cell inner membrane. The catalysed reaction is all-trans-octaprenyl diphosphate + 4-hydroxybenzoate = 4-hydroxy-3-(all-trans-octaprenyl)benzoate + diphosphate. Its pathway is cofactor biosynthesis; ubiquinone biosynthesis. Its function is as follows. Catalyzes the prenylation of para-hydroxybenzoate (PHB) with an all-trans polyprenyl group. Mediates the second step in the final reaction sequence of ubiquinone-8 (UQ-8) biosynthesis, which is the condensation of the polyisoprenoid side chain with PHB, generating the first membrane-bound Q intermediate 3-octaprenyl-4-hydroxybenzoate. The chain is 4-hydroxybenzoate octaprenyltransferase from Psychrobacter arcticus (strain DSM 17307 / VKM B-2377 / 273-4).